The following is a 219-amino-acid chain: Lipid transferase CIDEA (219 aa).

The region spanning 33–110 is the CIDE-N domain; the sequence is PARPFRVSNH…ILEKGQKWMP (78 aa). Positions 163-180 are amphipathic helix; it reads CTGLKGLLRSLLRFLSYS.

Belongs to the CIDE family. As to quaternary structure, homodimer. Interacts with CIDEC. Directly interacts with CEBPB. Interacts with isoform CLSTN3beta of CLSTN3; inhibiting the lipid transferase activity of CIDEA. In terms of tissue distribution, expressed in omental and subcutaneous adipose tissue (at protein level).

It localises to the lipid droplet. Its subcellular location is the nucleus. The catalysed reaction is a triacyl-sn-glycerol(in) = a triacyl-sn-glycerol(out). Functionally, lipid transferase that promotes unilocular lipid droplet formation by mediating lipid droplet fusion. Lipid droplet fusion promotes their enlargement, restricting lipolysis and favoring lipid storage. Localizes on the lipid droplet surface, at focal contact sites between lipid droplets, and mediates atypical lipid droplet fusion by promoting directional net neutral lipid transfer from the smaller to larger lipid droplets. The transfer direction may be driven by the internal pressure difference between the contacting lipid droplet pair and occurs at a lower rate than that promoted by CIDEC. May also act as a CEBPB coactivator in epithelial cells to control the expression of a subset of CEBPB downstream target genes, including ID2, IGF1, PRLR, SOCS1, SOCS3, XDH, but not casein. By interacting with CEBPB, strengthens the association of CEBPB with the XDH promoter, increases histone acetylation and dissociates HDAC1 from the promoter. When overexpressed, induces apoptosis; the physiological significance of its role in apoptosis is unclear. In Homo sapiens (Human), this protein is Lipid transferase CIDEA.